We begin with the raw amino-acid sequence, 645 residues long: Ethylene response sensor 2 (645 aa).

Helical transmembrane passes span 5–25, 54–74, 86–106, and 125–145; these read LLVQWLVFFFFFLIGSVVTAA, VGDFLIAIAYFSIPIELVYFV, VVCEFIAFIVLCGMTHLLAGF, and LTGIVSFLTALSLVTLLPLLL. Positions 97 and 101 each coordinate Cu cation. Residues 190 to 346 enclose the GAF domain; the sequence is DRHTILYTTL…VVADQVAVAI (157 aa). A Histidine kinase domain is found at 389 to 623; it reads MMSDAMRCPV…VFRFQLRRSM (235 aa).

It belongs to the ethylene receptor family. Heteromer with ETR1. The cofactor is Cu cation. Autophosphorylated predominantly on Ser residues. In terms of tissue distribution, expressed in etiolated seedlings, leaves, roots and stems. Highly expressed in flowers, stamens, pollen cells, tapetum cells, carpels and ovules.

The protein localises to the endoplasmic reticulum membrane. Functionally, ethylene receptor related to bacterial two-component regulators. Acts as a redundant negative regulator of ethylene signaling. In Arabidopsis thaliana (Mouse-ear cress), this protein is Ethylene response sensor 2 (ERS2).